The primary structure comprises 411 residues: Z-DNA-binding protein 1 (411 aa).

Z-binding domains follow at residues 8-70 (LSTG…SIGG) and 84-148 (SSAQ…HSRQ). Residues lysine 17 and lysine 43 each participate in a glycyl lysine isopeptide (Lys-Gly) (interchain with G-Cter in ubiquitin) cross-link. Positions 60-86 (SPEPATWSIGGAASGDGAPAIPENSSA) are disordered. Short sequence motifs (RIP homotypic interaction motif (RHIM)) lie at residues 188 to 205 (NSNA…REKA) and 237 to 261 (YIYM…LVGD). Disordered stretches follow at residues 263-303 (GKHP…EGDT) and 332-411 (KGEV…LSKQ). Polar residues-rich tracts occupy residues 268-292 (YSFS…NMQT), 350-371 (GTSS…SMLP), and 400-411 (IESSQDTGLSKQ).

In terms of assembly, homodimer. Interacts (via RIP homotypic interaction motif) with RIPK3; leading to RIPK3 activation and necroptosis; interaction is enhanced by CASP6. Interacts (via RIP homotypic interaction motif) with RIPK1. Component of the AIM2 PANoptosome complex, a multiprotein complex that drives inflammatory cell death (PANoptosis). (Microbial infection) Interacts (via RIP homotypic interaction motif) with murid herpesvirus protein RIR1 (via RIP homotypic interaction motif); leading to inhibition of ZBP1-dependent necroptosis. As to quaternary structure, (Microbial infection) Interacts with vaccinia virus E3 protein; leading to inhibit ZBP1-dependent necroptosis. Post-translationally, ubiquitinated; polyubiquitinated following influenza A virus (IAV) infection. In terms of processing, phosphorylated. As to expression, expressed in lung, spleen and liver. Lower levels were seen in heart, kidney and testis. Expression is greatly up-regulated in tumor stromal cells and activated macrophages.

The protein localises to the cytoplasm. Its subcellular location is the nucleus. With respect to regulation, ZBP1-dependent necroptosis is normally inhibited by RIPK1: RIPK1 inhibits the ZBP1-induced activation of RIPK3 via FADD-mediated recruitment of CASP8, which cleaves RIPK1 and limits TNF-induced necroptosis. Functionally, key innate sensor that recognizes and binds Z-RNA structures, which are produced by a number of viruses, such as herpesvirus, orthomyxovirus or flavivirus, and triggers different forms of cell death. ZBP1 acts as an essential mediator of pyroptosis, necroptosis and apoptosis (PANoptosis), an integral part of host defense against pathogens, by activating RIPK3, caspase-8 (CASP8), and the NLRP3 inflammasome. Key activator of necroptosis, a programmed cell death process in response to death-inducing TNF-alpha family members, via its ability to bind Z-RNA: once activated upon Z-RNA-binding, ZBP1 interacts and stimulates RIPK3 kinase, which phosphorylates and activates MLKL, triggering execution of programmed necrosis. In addition to TNF-induced necroptosis, necroptosis can also take place in the nucleus in response to orthomyxoviruses infection: ZBP1 recognizes and binds Z-RNA structures that are produced in infected nuclei by orthomyxoviruses, such as the influenza A virus (IAV), leading to ZBP1 activation, RIPK3 stimulation and subsequent MLKL phosphorylation, triggering disruption of the nuclear envelope and leakage of cellular DNA into the cytosol. ZBP1-dependent cell death in response to IAV infection promotes interleukin-1 alpha (IL1A) induction in an NLRP3-inflammasome-independent manner: IL1A expression is required for the optimal interleukin-1 beta (IL1B) production, and together, these cytokines promote infiltration of inflammatory neutrophils to the lung, leading to the formation of neutrophil extracellular traps. In addition to its direct role in driving necroptosis via its ability to sense Z-RNAs, also involved in PANoptosis triggered in response to bacterial infection: component of the AIM2 PANoptosome complex, a multiprotein complex that triggers PANoptosis. Also acts as the apical sensor of fungal infection responsible for activating PANoptosis. Involved in CASP8-mediated cell death via its interaction with RIPK1 but independently of its ability to sense Z-RNAs. In some cell types, also able to restrict viral replication by promoting cell death-independent responses. In response to flavivirus infection in neurons, promotes a cell death-independent pathway that restricts viral replication: together with RIPK3, promotes a death-independent transcriptional program that modifies the cellular metabolism via up-regulation expression of the enzyme ACOD1/IRG1 and production of the metabolite itaconate. Itaconate inhibits the activity of succinate dehydrogenase, generating a metabolic state in neurons that suppresses replication of viral genomes. The protein is Z-DNA-binding protein 1 of Mus musculus (Mouse).